Reading from the N-terminus, the 327-residue chain is Tetraacyldisaccharide 4'-kinase (327 aa).

56 to 63 (FVGGTGKT) contributes to the ATP binding site.

This sequence belongs to the LpxK family.

The enzyme catalyses a lipid A disaccharide + ATP = a lipid IVA + ADP + H(+). It functions in the pathway glycolipid biosynthesis; lipid IV(A) biosynthesis; lipid IV(A) from (3R)-3-hydroxytetradecanoyl-[acyl-carrier-protein] and UDP-N-acetyl-alpha-D-glucosamine: step 6/6. Its function is as follows. Transfers the gamma-phosphate of ATP to the 4'-position of a tetraacyldisaccharide 1-phosphate intermediate (termed DS-1-P) to form tetraacyldisaccharide 1,4'-bis-phosphate (lipid IVA). This chain is Tetraacyldisaccharide 4'-kinase, found in Halorhodospira halophila (strain DSM 244 / SL1) (Ectothiorhodospira halophila (strain DSM 244 / SL1)).